Reading from the N-terminus, the 263-residue chain is Endonuclease 8 (263 aa).

The active-site Schiff-base intermediate with DNA is the P2. Catalysis depends on E3, which acts as the Proton donor. K53 acts as the Proton donor; for beta-elimination activity in catalysis. DNA contacts are provided by Q70, R125, and N169. An FPG-type zinc finger spans residues 229-263; the sequence is KVFHRDGELCERCGGIIEKTTLSSRPFYWCPGCQH. The Proton donor; for delta-elimination activity role is filled by R253.

This sequence belongs to the FPG family. Zn(2+) is required as a cofactor.

The enzyme catalyses 2'-deoxyribonucleotide-(2'-deoxyribose 5'-phosphate)-2'-deoxyribonucleotide-DNA = a 3'-end 2'-deoxyribonucleotide-(2,3-dehydro-2,3-deoxyribose 5'-phosphate)-DNA + a 5'-end 5'-phospho-2'-deoxyribonucleoside-DNA + H(+). In terms of biological role, involved in base excision repair of DNA damaged by oxidation or by mutagenic agents. Acts as a DNA glycosylase that recognizes and removes damaged bases. Has a preference for oxidized pyrimidines, such as thymine glycol, 5,6-dihydrouracil and 5,6-dihydrothymine. Has AP (apurinic/apyrimidinic) lyase activity and introduces nicks in the DNA strand. Cleaves the DNA backbone by beta-delta elimination to generate a single-strand break at the site of the removed base with both 3'- and 5'-phosphates. This is Endonuclease 8 from Shigella flexneri serotype 5b (strain 8401).